Here is a 158-residue protein sequence, read N- to C-terminus: Phosphopantetheine adenylyltransferase (158 aa).

Thr10 provides a ligand contact to substrate. ATP contacts are provided by residues Thr10–Phe11 and His18. The substrate site is built by Lys42, Leu74, and Arg88. Residues Gly89 to Arg91, Glu99, and Trp124 to Thr130 contribute to the ATP site.

It belongs to the bacterial CoaD family. Homohexamer. Mg(2+) is required as a cofactor.

It localises to the cytoplasm. It catalyses the reaction (R)-4'-phosphopantetheine + ATP + H(+) = 3'-dephospho-CoA + diphosphate. Its pathway is cofactor biosynthesis; coenzyme A biosynthesis; CoA from (R)-pantothenate: step 4/5. Reversibly transfers an adenylyl group from ATP to 4'-phosphopantetheine, yielding dephospho-CoA (dPCoA) and pyrophosphate. The chain is Phosphopantetheine adenylyltransferase from Actinobacillus pleuropneumoniae serotype 7 (strain AP76).